The following is a 300-amino-acid chain: DNA repair protein RecO (300 aa).

The protein belongs to the RecO family.

Functionally, involved in DNA repair and RecF pathway recombination. In Nostoc punctiforme (strain ATCC 29133 / PCC 73102), this protein is DNA repair protein RecO.